The following is an 834-amino-acid chain: Unextended protein (834 aa).

The N-terminal stretch at 1–20 is a signal peptide; that stretch reads MNTYFISFITIIIFANGING. Topologically, residues 21-182 are extracellular; sequence TSVDTSNKLL…DFLKIKTFEP (162 aa). 3 N-linked (GlcNAc...) asparagine glycosylation sites follow: Asn38, Asn42, and Asn156. The 180-residue stretch at 182-361 folds into the CNNM transmembrane domain; sequence PLIPVWLAII…NDVNDLDKNE (180 aa). A helical transmembrane segment spans residues 183 to 203; that stretch reads LIPVWLAIIIIVTCLGFSALF. Topologically, residues 204-244 are cytoplasmic; the sequence is SGLNLGLMSMDRTELKILRNTGTEKEKKYASKIAPVRDQGN. The chain crosses the membrane as a helical span at residues 245 to 265; it reads YLLCSILLGNVLVNSTFTILL. Residues 266–267 are Extracellular-facing; the sequence is DG. Residues 268–288 traverse the membrane as a helical segment; the sequence is LTSGLFAVIFSTLAIVLFGEI. Residues 289–298 lie on the Cytoplasmic side of the membrane; it reads TPQAVCSRHG. The helical transmembrane segment at 299–319 threads the bilayer; the sequence is LAIGAKTILVTKTVMAITAPL. Residues 320–834 lie on the Extracellular side of the membrane; sequence SYPVSRILDK…DKFESKQSKP (515 aa). 2 CBS domains span residues 380 to 441 and 448 to 515; these read MTHI…NTPL and YQNP…IVDE. N-linked (GlcNAc...) asparagine glycosylation occurs at Asn522. 604–656 is an a nucleoside 3',5'-cyclic phosphate binding site; that stretch reads YIFTQGKAVDFFVLILEGRVEVTIGKEALMFESGPFTYFGTQALVPNVVIDSP. The segment at 739-765 is disordered; that stretch reads CFAQNQSTRRLSNRSINSSPTNMNRSP. Positions 740–763 are enriched in polar residues; it reads FAQNQSTRRLSNRSINSSPTNMNR. N-linked (GlcNAc...) asparagine glycosylation is found at Asn743, Asn751, and Asn790. The segment at 807 to 834 is disordered; sequence SGEQDTTAASMPLLPKLDDKFESKQSKP. The span at 822-834 shows a compositional bias: basic and acidic residues; sequence KLDDKFESKQSKP.

It belongs to the ACDP family. In terms of assembly, interacts with PRL-1, possibly at the plasma membrane.

It localises to the cell membrane. Functionally, probable metal transporter. Acts downstream of PRL-1 and protects the nervous system against olfactory carbon dioxide stimulation. The chain is Unextended protein from Drosophila melanogaster (Fruit fly).